Consider the following 172-residue polypeptide: Adenylate kinase isoenzyme 6 (172 aa).

ATP-binding residues include G13, G15, K16, T17, and T18. Residues 33–56 are NMP; the sequence is NVGDLAREEQLYDGYDEEYDCPIL. The interval 33–56 is NMPbind; sequence NVGDLAREEQLYDGYDEEYDCPIL. Residues 108-118 are LID; that stretch reads TRGYNEKKLTD. Residues R109 and K148 each coordinate ATP.

Belongs to the adenylate kinase family. AK6 subfamily. Monomer and homodimer. Interacts with small ribosomal subunit protein uS11. Not a structural component of 43S pre-ribosomes, but transiently interacts with them by binding to uS11. Interacts with COIL (via C-terminus). In terms of tissue distribution, expressed in heart, brain, placenta, lung, liver, skeletal muscle, kidney, pancreas, chorionic villi and the central nervous system.

The protein resides in the cytoplasm. It localises to the nucleus. The protein localises to the nucleoplasm. Its subcellular location is the cajal body. The enzyme catalyses AMP + ATP = 2 ADP. It carries out the reaction ATP + H2O = ADP + phosphate + H(+). Broad-specificity nucleoside monophosphate (NMP) kinase that catalyzes the reversible transfer of the terminal phosphate group between nucleoside triphosphates and monophosphates. Also has ATPase activity. Involved in the late cytoplasmic maturation steps of the 40S ribosomal particles, specifically 18S rRNA maturation. While NMP activity is not required for ribosome maturation, ATPase activity is. Associates transiently with small ribosomal subunit protein uS11. ATP hydrolysis breaks the interaction with uS11. May temporarily remove uS11 from the ribosome to enable a conformational change of the ribosomal RNA that is needed for the final maturation step of the small ribosomal subunit. Its NMP activity may have a role in nuclear energy homeostasis. AMP and dAMP are the preferred substrates, but CMP and dCMP are also good substrates. IMP is phosphorylated to a much lesser extent. All nucleoside triphosphates ATP, GTP, UTP, CTP, dATP, dCTP, dGTP, and TTP are accepted as phosphate donors. CTP is the best phosphate donor, followed by UTP, ATP, GTP and dCTP. May be involved in regulation of Cajal body (CB) formation. This chain is Adenylate kinase isoenzyme 6, found in Homo sapiens (Human).